Reading from the N-terminus, the 282-residue chain is E3 ubiquitin-protein ligase RNF217 (282 aa).

The tract at residues 1–218 (MSCRVCLEDR…LSIFGCKYRY (218 aa)) is TRIAD supradomain. The Zn(2+) site is built by C3, C6, C23, C26, C123, C126, H131, C136, C163, and C166. The segment at 3–49 (CRVCLEDRSIKPLPCCKKPVCDECLKRYLSSQVQLGQAEIQCPITEC) adopts an RING-type 1 zinc-finger fold. The IBR-type zinc finger occupies 68 to 136 (IKYKYFLELS…HAPWHEGVNC (69 aa)). The RING-type 2; atypical zinc-finger motif lies at 163–192 (CPRCKVHIQRTEGCDHMTCSQCNTNFCYRC). The active site involves C176. Zn(2+) is bound by residues C181, C184, C189, C192, H205, and C214. A helical membrane pass occupies residues 243–263 (LLIVLGLVLGALAVVIGLFGL).

This sequence belongs to the RBR family. RNF217 subfamily.

Its subcellular location is the cytoplasm. It is found in the membrane. It catalyses the reaction [E2 ubiquitin-conjugating enzyme]-S-ubiquitinyl-L-cysteine + [acceptor protein]-L-lysine = [E2 ubiquitin-conjugating enzyme]-L-cysteine + [acceptor protein]-N(6)-ubiquitinyl-L-lysine.. It functions in the pathway protein modification; protein ubiquitination. In terms of biological role, E3 ubiquitin-protein ligase which accepts ubiquitin from E2 ubiquitin-conjugating enzymes in the form of a thioester and then directly transfers the ubiquitin to targeted substrates. Mediates the degradation of the iron exporter ferroportin/SLC40A1 and thus regulates iron homeostasis. The polypeptide is E3 ubiquitin-protein ligase RNF217 (rnf217) (Xenopus laevis (African clawed frog)).